The primary structure comprises 386 residues: Diaminopimelate decarboxylase (386 aa).

An N6-(pyridoxal phosphate)lysine modification is found at Lys46. Pyridoxal 5'-phosphate-binding positions include Gly214 and 246-249 (EIGR). Residues Arg249, Arg285, and Tyr289 each contribute to the substrate site. Cys314 serves as the catalytic Proton donor. 2 residues coordinate substrate: Glu315 and Tyr343. Tyr343 is a binding site for pyridoxal 5'-phosphate.

The protein belongs to the Orn/Lys/Arg decarboxylase class-II family. LysA subfamily. In terms of assembly, homodimer. Pyridoxal 5'-phosphate is required as a cofactor.

It carries out the reaction meso-2,6-diaminopimelate + H(+) = L-lysine + CO2. Its pathway is amino-acid biosynthesis; L-lysine biosynthesis via DAP pathway; L-lysine from DL-2,6-diaminopimelate: step 1/1. In terms of biological role, specifically catalyzes the decarboxylation of meso-diaminopimelate (meso-DAP) to L-lysine. The sequence is that of Diaminopimelate decarboxylase from Thermotoga maritima (strain ATCC 43589 / DSM 3109 / JCM 10099 / NBRC 100826 / MSB8).